The chain runs to 61 residues: Nakoroxin (61 aa).

Intrachain disulfides connect Cys-3–Cys-19, Cys-12–Cys-37, Cys-41–Cys-49, and Cys-50–Cys-55.

This sequence belongs to the three-finger toxin family. Short-chain subfamily. Expressed by the venom gland.

The protein resides in the secreted. Its function is as follows. Shows no cytotoxicity and does not inhibit the binding of alpha-bungarotoxin to nicotinic acetylcholine receptors of muscle and alpha-7/CHRNA7 types. However, it potentiates the binding of alpha-bungarotoxin to the acetylcholine-binding protein from Lymnaea stagnalis. The chain is Nakoroxin from Naja kaouthia (Monocled cobra).